The sequence spans 229 residues: Large ribosomal subunit protein uL1 (229 aa).

The protein belongs to the universal ribosomal protein uL1 family. Part of the 50S ribosomal subunit.

In terms of biological role, binds directly to 23S rRNA. The L1 stalk is quite mobile in the ribosome, and is involved in E site tRNA release. Its function is as follows. Protein L1 is also a translational repressor protein, it controls the translation of the L11 operon by binding to its mRNA. The sequence is that of Large ribosomal subunit protein uL1 from Ureaplasma urealyticum serovar 10 (strain ATCC 33699 / Western).